A 564-amino-acid polypeptide reads, in one-letter code: Dihydroxy-acid dehydratase (564 aa).

Residues 1-10 are compositionally biased toward basic residues; it reads MTDTRTKRRM. The tract at residues 1–23 is disordered; sequence MTDTRTKRRMNWNSHHITQGDER. Cysteine 57 contacts [2Fe-2S] cluster. Aspartate 89 contacts Mg(2+). Cysteine 130 lines the [2Fe-2S] cluster pocket. 2 residues coordinate Mg(2+): aspartate 131 and lysine 132. Lysine 132 bears the N6-carboxylysine mark. Cysteine 202 is a [2Fe-2S] cluster binding site. Glutamate 454 lines the Mg(2+) pocket. The active-site Proton acceptor is the serine 480.

It belongs to the IlvD/Edd family. Homodimer. It depends on [2Fe-2S] cluster as a cofactor. Mg(2+) serves as cofactor.

It catalyses the reaction (2R)-2,3-dihydroxy-3-methylbutanoate = 3-methyl-2-oxobutanoate + H2O. The enzyme catalyses (2R,3R)-2,3-dihydroxy-3-methylpentanoate = (S)-3-methyl-2-oxopentanoate + H2O. The protein operates within amino-acid biosynthesis; L-isoleucine biosynthesis; L-isoleucine from 2-oxobutanoate: step 3/4. It participates in amino-acid biosynthesis; L-valine biosynthesis; L-valine from pyruvate: step 3/4. Functionally, functions in the biosynthesis of branched-chain amino acids. Catalyzes the dehydration of (2R,3R)-2,3-dihydroxy-3-methylpentanoate (2,3-dihydroxy-3-methylvalerate) into 2-oxo-3-methylpentanoate (2-oxo-3-methylvalerate) and of (2R)-2,3-dihydroxy-3-methylbutanoate (2,3-dihydroxyisovalerate) into 2-oxo-3-methylbutanoate (2-oxoisovalerate), the penultimate precursor to L-isoleucine and L-valine, respectively. The sequence is that of Dihydroxy-acid dehydratase from Deinococcus geothermalis (strain DSM 11300 / CIP 105573 / AG-3a).